We begin with the raw amino-acid sequence, 1166 residues long: Myosin-1 (1166 aa).

Residues 1–13 (MSQKVTPFMQSLK) show a composition bias toward polar residues. The segment at 1–71 (MSQKVTPFMQ…AGDSEDSPYS (71 aa)) is disordered. The residue at position 14 (Ser14) is a Phosphoserine. Polar residues predominate over residues 32–45 (NSSGASVRLTNSNV). Residues 112–161 (KKILQSWIQLPNGNWELGKILSTSGEESVISLPEGKVIKVISETLVPANP) enclose the Myosin N-terminal SH3-like domain. Positions 165 to 837 (DGVDDLMQLS…QIGVLEDTRN (673 aa)) constitute a Myosin motor domain. ATP contacts are provided by residues 256-263 (GESGAGKT) and 304-312 (NDNSSRFGK). Actin-binding regions lie at residues 589-623 (LFEKKPLGLLSLLDEESTFPNGTDLTLANKLKQHL) and 717-739 (LFQLMQRLGNTTPHFIRCIKPNN). IQ domains follow at residues 839 to 868 (TLHGILRVQSSFRGYQARCLLKELKRGISI), 862 to 891 (LKRGISILQSFVRGEKIRKEFAELRRRHKA), 888 to 917 (RHKAAATIQSQVKSKIARIQYKGIADASVV), and 911 to 940 (IADASVVIQSAIRGWLVRRCSGDIGWLKSG). Residues 955–1005 (SVLSELQRRVLKAEAALREKEEENDILQQRLQQYENRWSEYETKMKSMEEI) adopt a coiled-coil conformation. Residues 1030-1065 (ARNSDASVNASDATDWDSSSNQFRSQTSNGVGSRLQ) are disordered. Over residues 1032 to 1060 (NSDASVNASDATDWDSSSNQFRSQTSNGV) the composition is skewed to polar residues.

It belongs to the TRAFAC class myosin-kinesin ATPase superfamily. Myosin family. Plant myosin class VIII subfamily. As to quaternary structure, homodimer.

The protein localises to the cell junction. It localises to the plasmodesma. It is found in the cytoplasm. Its subcellular location is the cytoskeleton. The protein resides in the phragmoplast. The protein localises to the endosome. It localises to the endoplasmic reticulum. Myosin heavy chain that is required for the cell cycle-regulated transport of various organelles and proteins for their segregation. Functions by binding with its tail domain to receptor proteins on organelles and exerting force with its N-terminal motor domain against actin filaments, thereby transporting its cargo along polarized actin cables. Involved in endocytosis via its action in endosomal trafficking. This is Myosin-1 (VIII-1) from Arabidopsis thaliana (Mouse-ear cress).